Here is a 316-residue protein sequence, read N- to C-terminus: HPr kinase/phosphorylase (316 aa).

Catalysis depends on residues H143 and K164. 158–165 (GEAGSGKS) provides a ligand contact to ATP. S165 lines the Mg(2+) pocket. The active-site Proton acceptor; for phosphorylation activity. Proton donor; for dephosphorylation activity is D182. An important for the catalytic mechanism of both phosphorylation and dephosphorylation region spans residues 206–215 (LEVRGLGVLN). E207 contributes to the Mg(2+) binding site. Residue R251 is part of the active site. Residues 272–277 (PVMPGR) are important for the catalytic mechanism of dephosphorylation.

Belongs to the HPrK/P family. In terms of assembly, homohexamer. The cofactor is Mg(2+).

The enzyme catalyses [HPr protein]-L-serine + ATP = [HPr protein]-O-phospho-L-serine + ADP + H(+). The catalysed reaction is [HPr protein]-O-phospho-L-serine + phosphate + H(+) = [HPr protein]-L-serine + diphosphate. Its function is as follows. Catalyzes the ATP- as well as the pyrophosphate-dependent phosphorylation of a specific serine residue in HPr, a phosphocarrier protein of the phosphoenolpyruvate-dependent sugar phosphotransferase system (PTS). HprK/P also catalyzes the pyrophosphate-producing, inorganic phosphate-dependent dephosphorylation (phosphorolysis) of seryl-phosphorylated HPr (P-Ser-HPr). This chain is HPr kinase/phosphorylase, found in Xanthomonas euvesicatoria pv. vesicatoria (strain 85-10) (Xanthomonas campestris pv. vesicatoria).